The chain runs to 290 residues: Ribosomal RNA small subunit methyltransferase A (290 aa).

S-adenosyl-L-methionine is bound by residues Asn27, Leu29, Gly54, Glu75, Asp100, and Asn125.

The protein belongs to the class I-like SAM-binding methyltransferase superfamily. rRNA adenine N(6)-methyltransferase family. RsmA subfamily.

The protein localises to the cytoplasm. It carries out the reaction adenosine(1518)/adenosine(1519) in 16S rRNA + 4 S-adenosyl-L-methionine = N(6)-dimethyladenosine(1518)/N(6)-dimethyladenosine(1519) in 16S rRNA + 4 S-adenosyl-L-homocysteine + 4 H(+). Its function is as follows. Specifically dimethylates two adjacent adenosines (A1518 and A1519) in the loop of a conserved hairpin near the 3'-end of 16S rRNA in the 30S particle. May play a critical role in biogenesis of 30S subunits. The sequence is that of Ribosomal RNA small subunit methyltransferase A from Streptococcus pneumoniae (strain CGSP14).